The following is a 343-amino-acid chain: MTDDIVFENMVIDDTIVEEEDVEMKYYLKNKKEFEFLAKEMLSGKKILFITGAGLSINSGISAYRNTKTSVWSNFITEWGTRKKFEQDPAQFWNHFWLRTHEKQEYLDALPNSGHLAISNFVEYLGSNVITQNVDALHLKAKVPIEKLVEVHGRISLYKCITKGCRFEYDDTIDNIEIGDYSINGTTMKQGNLEITPPLCPECKKPILPQSLLFDENYSSHQFYNIEKAMDWIQEADIFIFIGTSFSVGITEEVICHAQSERKKMFNFNIFKETKISGLKSIVGKSEITLPLLERQLLYEAQKRNNGKKQIWYGNTIKRIVSENSMLLKEAMLKNDTKSSVKV.

One can recognise a Deacetylase sirtuin-type domain in the interval 27–300; it reads YLKNKKEFEF…PLLERQLLYE (274 aa). H152 acts as the Proton acceptor in catalysis. Residues C160, C165, C200, and C203 each coordinate Zn(2+).

Belongs to the sirtuin family.

It is found in the nucleus. It catalyses the reaction N(6)-acetyl-L-lysyl-[protein] + NAD(+) + H2O = 2''-O-acetyl-ADP-D-ribose + nicotinamide + L-lysyl-[protein]. Functionally, NAD-dependent deacetylase, which plays an important role in the regulation of transcriptional repression. May play a role in cell cycle. When overexpressed, the cell cycle is accelerated. The protein is NAD-dependent deacetylase sir2E (sir2E) of Dictyostelium discoideum (Social amoeba).